The sequence spans 325 residues: Peroxidase 68 (325 aa).

The signal sequence occupies residues 1-28; the sequence is MECYEQSRQRAAFVVLLFIVMLGSQAQA. Gln-29 carries the pyrrolidone carboxylic acid modification. Cystine bridges form between Cys-39–Cys-119, Cys-72–Cys-77, Cys-125–Cys-321, and Cys-205–Cys-230. His-70 serves as the catalytic Proton acceptor. Ca(2+)-binding residues include Asp-71, Val-74, Gly-76, Asp-78, and Ser-80. Residue Asn-99 is glycosylated (N-linked (GlcNAc...) asparagine). Pro-168 contributes to the substrate binding site. Heme b is bound at residue His-198. A Ca(2+)-binding site is contributed by Thr-199. Residue Asn-214 is glycosylated (N-linked (GlcNAc...) asparagine). 3 residues coordinate Ca(2+): Asp-245, Thr-248, and Asp-253.

This sequence belongs to the peroxidase family. Classical plant (class III) peroxidase subfamily. Heme b serves as cofactor. Ca(2+) is required as a cofactor.

The protein localises to the secreted. The enzyme catalyses 2 a phenolic donor + H2O2 = 2 a phenolic radical donor + 2 H2O. Removal of H(2)O(2), oxidation of toxic reductants, biosynthesis and degradation of lignin, suberization, auxin catabolism, response to environmental stresses such as wounding, pathogen attack and oxidative stress. These functions might be dependent on each isozyme/isoform in each plant tissue. In Arabidopsis thaliana (Mouse-ear cress), this protein is Peroxidase 68 (PER68).